The following is a 179-amino-acid chain: Adenine phosphoribosyltransferase (179 aa).

Belongs to the purine/pyrimidine phosphoribosyltransferase family. Homodimer.

It localises to the cytoplasm. It catalyses the reaction AMP + diphosphate = 5-phospho-alpha-D-ribose 1-diphosphate + adenine. Its pathway is purine metabolism; AMP biosynthesis via salvage pathway; AMP from adenine: step 1/1. Functionally, catalyzes a salvage reaction resulting in the formation of AMP, that is energically less costly than de novo synthesis. The sequence is that of Adenine phosphoribosyltransferase from Histophilus somni (strain 129Pt) (Haemophilus somnus).